Consider the following 554-residue polypeptide: Membrane protein insertase YidC (554 aa).

5 consecutive transmembrane segments (helical) span residues 7 to 24 (VLWV…DNWQ), 362 to 382 (VVGN…AVFF), 436 to 456 (LPVV…LASV), 475 to 495 (PFFI…SLNP), and 510 to 530 (PIAF…YYVV).

Belongs to the OXA1/ALB3/YidC family. Type 1 subfamily. As to quaternary structure, interacts with the Sec translocase complex via SecD. Specifically interacts with transmembrane segments of nascent integral membrane proteins during membrane integration.

The protein localises to the cell inner membrane. Required for the insertion and/or proper folding and/or complex formation of integral membrane proteins into the membrane. Involved in integration of membrane proteins that insert both dependently and independently of the Sec translocase complex, as well as at least some lipoproteins. Aids folding of multispanning membrane proteins. The chain is Membrane protein insertase YidC from Burkholderia vietnamiensis (strain G4 / LMG 22486) (Burkholderia cepacia (strain R1808)).